The chain runs to 336 residues: Major histocompatibility complex class I-related protein 1 (336 aa).

Residues Met-1 to Ala-18 form the signal peptide. Positions Arg-19–Ser-105 are alpha-1. The tract at residues Arg-19–Thr-197 is antigen-binding cleft. The Extracellular portion of the chain corresponds to Arg-19 to Val-298. Residues Tyr-25 and Arg-27 each contribute to the 8-(9H-purin-6-yl)-2-oxa-8-azabicyclo[3.3.1]nona-3,6-diene-4,6-dicarbaldehyde site. Positions 27, 42, and 61 each coordinate 5-(2-oxoethylideneamino)-6-(D-ribitylamino)uracil. Arg-27, Ser-42, and Lys-61 together coordinate 5-(2-oxopropylideneamino)-6-(D-ribitylamino)uracil. 7-hydroxy-6-methyl-8-(1-D-ribityl)lumazine contacts are provided by Arg-27, Ser-42, and Lys-61. Positions 61 and 76 each coordinate 8-(9H-purin-6-yl)-2-oxa-8-azabicyclo[3.3.1]nona-3,6-diene-4,6-dicarbaldehyde. 2-amino-4-oxopteridine-6-carbaldehyde is bound at residue Lys-61. Residue Lys-61 coordinates pyridoxal. An N-linked (GlcNAc...) asparagine glycan is attached at Asn-103. Residues Gly-106–Thr-197 form an alpha-2 region. 8-(9H-purin-6-yl)-2-oxa-8-azabicyclo[3.3.1]nona-3,6-diene-4,6-dicarbaldehyde is bound at residue Arg-112. Positions 112, 170, and 171 each coordinate 5-(2-oxoethylideneamino)-6-(D-ribitylamino)uracil. 5-(2-oxopropylideneamino)-6-(D-ribitylamino)uracil-binding residues include Arg-112, Tyr-170, and Gln-171. 7-hydroxy-6-methyl-8-(1-D-ribityl)lumazine is bound by residues Arg-112, Tyr-170, and Gln-171. Intrachain disulfides connect Cys-116-Cys-179 and Cys-218-Cys-274. The tract at residues Glu-198–Gln-289 is alpha-3. The Ig-like C1-type domain maps to Pro-200 to Leu-295. The tract at residues Glu-290–Val-298 is connecting peptide. The helical transmembrane segment at Lys-299–Arg-319 threads the bilayer. The Cytoplasmic portion of the chain corresponds to Lys-320 to His-336.

Belongs to the MHC class I family. In terms of assembly, heterotrimer that consists of MR1, B2M and metabolite antigen. Major classes of metabolite ligands presented by MR1 include riboflavin-related antigens, pyrimidines and ribityl lumazines, nucleobase adducts and folate derivatives. Forms reversible covalent Schiff base complexes with microbial pyrimidine-based metabolite, which serves as a molecular switch triggering complete folding, stable association with B2M and translocation of the ternary complex from endoplasmic reticulum to the plasma membrane. Alternatively, forms non-Schiff base complexes with ribityl lumazines. On antigen-presenting cells, the ternary complex interacts with TCR on MR1-restricted T cells. Interacts with TAPBP and TAPBPL chaperones in the endoplasmic reticulum. TAPBP associated or not with MHC class I peptide loading complex binds ligand-free MR1 or MR1-B2M complex, providing for stable MR1 pools ready for metabolite antigen processing. TAPBPL interacts with MR1 in a ligand-independent way; this interaction may stabilize MR1 pool and facilitate ligand loading and dissociation. Structurally, MR1-B2M heterodimer adopts a topology similar to classical MHC class I molecules, with alpha-1 and alpha-2 domains of MR1 forming the antigen-binding cleft composed of two alpha-helices resting on a floor of 7-stranded anti-parallel beta-pleated sheet. MR1-B2M heterodimer (via alpha-helices) interacts with TCR (via CDR domains). In terms of processing, N-glycosylated.

It localises to the cell membrane. Its subcellular location is the endoplasmic reticulum membrane. It is found in the golgi apparatus membrane. The protein resides in the early endosome membrane. The protein localises to the late endosome membrane. Antigen-presenting molecule specialized in displaying microbial pyrimidine-based metabolites to alpha-beta T cell receptors (TCR) on innate-type mucosal-associated invariant T (MAIT) cells. In complex with B2M preferentially presents riboflavin-derived metabolites to semi-invariant TCRs on MAIT cells, guiding immune surveillance of the microbial metabolome at mucosal epithelial barriers. Signature pyrimidine-based microbial antigens are generated via non-enzymatic condensation of metabolite intermediates of the riboflavin pathway with by-products arising from other metabolic pathways such as glycolysis. Typical potent antigenic metabolites are 5-(2-oxoethylideneamino)-6-D-ribitylaminouracil (5-OE-RU) and 5-(2-oxopropylideneamino)-6-D-ribitylaminouracil (5-OP-RU), products of condensation of 5-amino-6-D-ribityaminouracil (5-A-RU) with glyoxal or methylglyoxal by-products, respectively. May present microbial antigens to various MAIT cell subsets, providing for unique recognition of diverse microbes, including pathogens that do not synthesize riboflavin. Upon antigen recognition, elicits rapid innate-type MAIT cell activation to eliminate pathogenic microbes by directly killing infected cells. During T cell development, drives thymic selection and post-thymic terminal differentiation of MAIT cells in a process dependent on commensal microflora. Acts as an immune sensor of cancer cell metabolome. May present a tumor-specific or -associated metabolite essential for cancer cell survival to a pan-cancer TCR on a non-MAIT CD8-positive T cell clone, triggering T cell-mediated killing of a wide range of cancer cell types. May present tumor-enriched pyridoxal and pyridoxal 5'-phosphate antigens, enabling preferential recognition of cancer cells. Presents nucleobase carbonyl adducts generated during oxidative stress. Captures M3Ade, a nucleobase adduct composed of one adenine modified by a malondialdehyde trimer, for recognition by MR1-restricted T cell clones expressing a polyclonal TCR repertoire. This Bos taurus (Bovine) protein is Major histocompatibility complex class I-related protein 1.